The following is a 510-amino-acid chain: Probable cytosol aminopeptidase (510 aa).

2 residues coordinate Mn(2+): K272 and D277. K284 is a catalytic residue. Residues D296, D355, and E357 each contribute to the Mn(2+) site. R359 is an active-site residue.

Belongs to the peptidase M17 family. Mn(2+) is required as a cofactor.

The protein localises to the cytoplasm. The catalysed reaction is Release of an N-terminal amino acid, Xaa-|-Yaa-, in which Xaa is preferably Leu, but may be other amino acids including Pro although not Arg or Lys, and Yaa may be Pro. Amino acid amides and methyl esters are also readily hydrolyzed, but rates on arylamides are exceedingly low.. The enzyme catalyses Release of an N-terminal amino acid, preferentially leucine, but not glutamic or aspartic acids.. Presumably involved in the processing and regular turnover of intracellular proteins. Catalyzes the removal of unsubstituted N-terminal amino acids from various peptides. This Synechococcus sp. (strain JA-2-3B'a(2-13)) (Cyanobacteria bacterium Yellowstone B-Prime) protein is Probable cytosol aminopeptidase.